Here is a 528-residue protein sequence, read N- to C-terminus: Probable protein phosphatase 2C 51 (528 aa).

Residues 8-28 (SLLNLGLLIIFFVFFFLVINC) traverse the membrane as a helical segment. In terms of domain architecture, PPM-type phosphatase spans 71–445 (RCHTAAIQGR…DNMAAVVVPL (375 aa)). Mn(2+) is bound by residues D117, G118, D385, and D436.

This sequence belongs to the PP2C family. It depends on Mg(2+) as a cofactor. Mn(2+) is required as a cofactor.

Its subcellular location is the membrane. The enzyme catalyses O-phospho-L-seryl-[protein] + H2O = L-seryl-[protein] + phosphate. It carries out the reaction O-phospho-L-threonyl-[protein] + H2O = L-threonyl-[protein] + phosphate. This Arabidopsis thaliana (Mouse-ear cress) protein is Probable protein phosphatase 2C 51.